A 209-amino-acid chain; its full sequence is Ribosomal RNA large subunit methyltransferase E (209 aa).

Gly63, Trp65, Asp83, Asp99, and Asp124 together coordinate S-adenosyl-L-methionine. The Proton acceptor role is filled by Lys164.

It belongs to the class I-like SAM-binding methyltransferase superfamily. RNA methyltransferase RlmE family.

The protein localises to the cytoplasm. It carries out the reaction uridine(2552) in 23S rRNA + S-adenosyl-L-methionine = 2'-O-methyluridine(2552) in 23S rRNA + S-adenosyl-L-homocysteine + H(+). Specifically methylates the uridine in position 2552 of 23S rRNA at the 2'-O position of the ribose in the fully assembled 50S ribosomal subunit. This is Ribosomal RNA large subunit methyltransferase E from Shewanella amazonensis (strain ATCC BAA-1098 / SB2B).